Here is a 378-residue protein sequence, read N- to C-terminus: Formate dehydrogenase 2, mitochondrial (378 aa).

A mitochondrion-targeting transit peptide spans 1–18 (MAMWRAPSAAGQLLGRAL). Substrate-binding residues include V122 and N146. NAD(+) is bound by residues T147, 201–202 (RI), D221, 256–260 (PLTEK), N282, D308, and 332–335 (HCSG).

Belongs to the D-isomer specific 2-hydroxyacid dehydrogenase family. FDH subfamily. As to quaternary structure, homodimer.

Its subcellular location is the mitochondrion. The enzyme catalyses formate + NAD(+) = CO2 + NADH. In terms of biological role, catalyzes the NAD(+)-dependent oxidation of formate to carbon dioxide. Involved in the cell stress response. This is Formate dehydrogenase 2, mitochondrial from Oryza sativa subsp. japonica (Rice).